The sequence spans 217 residues: Trimethylamine corrinoid protein (217 aa).

Residues 1 to 92 (MANKEEIIAK…EMEKRKSQTK (92 aa)) enclose the B12-binding N-terminal domain. Residues 94 to 217 (LGTVAIGTIE…VAKVKAALNV (124 aa)) form the B12-binding domain. His107 lines the methylcob(III)alamin pocket.

Belongs to the methylamine corrinoid protein family. In terms of assembly, can form a complex with MttB.

It participates in one-carbon metabolism; methanogenesis from trimethylamine. In terms of biological role, acts probably as a methyl group carrier between MttB and either MtbA or MtaA. This Methanosarcina barkeri protein is Trimethylamine corrinoid protein.